We begin with the raw amino-acid sequence, 536 residues long: Phosphoenolpyruvate carboxykinase (ATP) (536 aa).

The substrate site is built by arginine 62, tyrosine 203, and lysine 209. ATP contacts are provided by residues lysine 209, histidine 228, and 244-252 (GLSGTGKTT). Lysine 209 and histidine 228 together coordinate Mn(2+). Aspartate 265 is a binding site for Mn(2+). ATP-binding positions include glutamate 293, arginine 329, 445–446 (RI), and threonine 451. Substrate is bound at residue arginine 329.

The protein belongs to the phosphoenolpyruvate carboxykinase (ATP) family. In terms of assembly, monomer. Requires Mn(2+) as cofactor.

The protein localises to the cytoplasm. The catalysed reaction is oxaloacetate + ATP = phosphoenolpyruvate + ADP + CO2. It participates in carbohydrate biosynthesis; gluconeogenesis. Its function is as follows. Involved in the gluconeogenesis. Catalyzes the conversion of oxaloacetate (OAA) to phosphoenolpyruvate (PEP) through direct phosphoryl transfer between the nucleoside triphosphate and OAA. In Actinobacillus pleuropneumoniae serotype 5b (strain L20), this protein is Phosphoenolpyruvate carboxykinase (ATP).